The primary structure comprises 192 residues: Shikimate kinase (192 aa).

Residue 32-37 (GAGKSA) participates in ATP binding. A Mg(2+)-binding site is contributed by serine 36. Aspartate 54, arginine 78, and glycine 100 together coordinate substrate. Arginine 138 is a binding site for ATP. Arginine 157 contributes to the substrate binding site.

It belongs to the shikimate kinase family. In terms of assembly, monomer. It depends on Mg(2+) as a cofactor.

Its subcellular location is the cytoplasm. The enzyme catalyses shikimate + ATP = 3-phosphoshikimate + ADP + H(+). The protein operates within metabolic intermediate biosynthesis; chorismate biosynthesis; chorismate from D-erythrose 4-phosphate and phosphoenolpyruvate: step 5/7. Its function is as follows. Catalyzes the specific phosphorylation of the 3-hydroxyl group of shikimic acid using ATP as a cosubstrate. The chain is Shikimate kinase from Rhizobium meliloti (strain 1021) (Ensifer meliloti).